A 640-amino-acid polypeptide reads, in one-letter code: Chaperone protein dnaK2 (640 aa).

The residue at position 197 (T197) is a Phosphothreonine; by autocatalysis. The tract at residues V605–K640 is disordered. Positions G627 to K640 are enriched in acidic residues.

It belongs to the heat shock protein 70 family.

Its function is as follows. Acts as a chaperone. The polypeptide is Chaperone protein dnaK2 (dnaK2) (Thermosynechococcus vestitus (strain NIES-2133 / IAM M-273 / BP-1)).